Here is a 179-residue protein sequence, read N- to C-terminus: Large ribosomal subunit protein uL5 (179 aa).

This sequence belongs to the universal ribosomal protein uL5 family. Part of the 50S ribosomal subunit; part of the 5S rRNA/L5/L18/L25 subcomplex. Contacts the 5S rRNA and the P site tRNA. Forms a bridge to the 30S subunit in the 70S ribosome.

Functionally, this is one of the proteins that bind and probably mediate the attachment of the 5S RNA into the large ribosomal subunit, where it forms part of the central protuberance. In the 70S ribosome it contacts protein S13 of the 30S subunit (bridge B1b), connecting the 2 subunits; this bridge is implicated in subunit movement. Contacts the P site tRNA; the 5S rRNA and some of its associated proteins might help stabilize positioning of ribosome-bound tRNAs. The polypeptide is Large ribosomal subunit protein uL5 (Verminephrobacter eiseniae (strain EF01-2)).